The chain runs to 1284 residues: Collagen alpha-1(XX) chain (1284 aa).

An N-terminal signal peptide occupies residues 1–22; the sequence is MSSGDPAHLGLCLWLWLGATLG. Residues 28–119 form the Fibronectin type-III 1 domain; sequence ASGLLRLAVL…EFVIEDLKSS (92 aa). The disordered stretch occupies residues 122–171; it reads DRSSQRPLGSGAPEPTPSHTGSPDPEQASEPQVAFTPSQDPRTPAGPQFR. Residues 179-354 enclose the VWFA domain; sequence DMVFLVDGSW…GALAGLLSRL (176 aa). Fibronectin type-III domains follow at residues 379–468, 469–559, 560–647, 649–738, and 743–833; these read APTS…APLP, PPRA…TLAP, PRHL…TKKA, SPSQ…TPST, and PPSN…ACPA. Residue N607 is glycosylated (N-linked (GlcNAc...) asparagine). Residues 842-1037 enclose the Laminin G-like domain; sequence GFDLMVAFSL…LQMLQIVCSD (196 aa). Disordered regions lie at residues 1065–1190 and 1212–1284; these read SCSS…EKGE and SFHE…GLWE. Over residues 1071 to 1082 the composition is skewed to pro residues; that stretch reads PGPPGPQGPPGL. 2 Collagen-like domains span residues 1071-1127 and 1133-1190; these read PGPP…IPGR and PKGM…EKGE. Composition is skewed to low complexity over residues 1112 to 1125 and 1166 to 1181; these read LPGL…QGIP and ERGP…LPGP. Over residues 1271–1284 the composition is skewed to polar residues; that stretch reads SPGQQGASTQGLWE.

As to expression, high expression in heart, lung, liver, skeletal muscle, kidney, pancreas, spleen, testis, ovary, subthalamic nucleus and fetal liver. Weak expression in other tissues tested.

It localises to the secreted. The protein resides in the extracellular space. Functionally, probable collagen protein. The chain is Collagen alpha-1(XX) chain (COL20A1) from Homo sapiens (Human).